Here is a 606-residue protein sequence, read N- to C-terminus: Melanoma-associated antigen D2 (606 aa).

Disordered stretches follow at residues 1–29 (MSDT…MMQT) and 52–204 (SEDV…GGRR). N-acetylserine is present on Ser-2. At Ser-5 the chain carries Phosphoserine. A Phosphothreonine modification is found at Thr-72. Residues 79–100 (PATQASSTTQLTDTQVLATENK) are compositionally biased toward polar residues. Over residues 122–131 (ETKKVSHVAD) the composition is skewed to basic and acidic residues. The segment covering 142-164 (EAAPSQASADEPEPESAAAQSQE) has biased composition (low complexity). Ser-157 bears the Phosphoserine mark. Basic residues predominate over residues 171–181 (KVKAKKARKVK). A phosphoserine mark is found at Ser-190, Ser-191, Ser-194, Ser-197, Ser-244, and Ser-247. Basic residues predominate over residues 248–260 (PKARRGKARRRAA). The tract at residues 248 to 275 (PKARRGKARRRAAKLQSSQEPEAPPPRD) is disordered. Ser-264 and Ser-265 each carry phosphoserine. One can recognise an MAGE domain in the interval 279-478 (LQGRANDLVK…KEWAAQYREA (200 aa)). The interval 534-563 (GAEAKAKAQESGSASTGASTSTNNSASASA) is disordered.

Interacts with GNAS.

Regulates the expression, localization to the plasma membrane and function of the sodium chloride cotransporters SLC12A1 and SLC12A3, two key components of salt reabsorption in the distal renal tubule. The polypeptide is Melanoma-associated antigen D2 (MAGED2) (Pongo abelii (Sumatran orangutan)).